A 224-amino-acid chain; its full sequence is 7-cyano-7-deazaguanine synthase (224 aa).

10–20 is a binding site for ATP; that stretch reads LSGGLDSATVV. The Zn(2+) site is built by Cys189, Cys199, Cys202, and Cys205.

The protein belongs to the QueC family. Zn(2+) is required as a cofactor.

The catalysed reaction is 7-carboxy-7-deazaguanine + NH4(+) + ATP = 7-cyano-7-deazaguanine + ADP + phosphate + H2O + H(+). The protein operates within purine metabolism; 7-cyano-7-deazaguanine biosynthesis. Its function is as follows. Catalyzes the ATP-dependent conversion of 7-carboxy-7-deazaguanine (CDG) to 7-cyano-7-deazaguanine (preQ(0)). The sequence is that of 7-cyano-7-deazaguanine synthase from Pseudomonas paraeruginosa (strain DSM 24068 / PA7) (Pseudomonas aeruginosa (strain PA7)).